We begin with the raw amino-acid sequence, 229 residues long: Large ribosomal subunit protein uL1 (229 aa).

This sequence belongs to the universal ribosomal protein uL1 family. In terms of assembly, part of the 50S ribosomal subunit.

In terms of biological role, binds directly to 23S rRNA. The L1 stalk is quite mobile in the ribosome, and is involved in E site tRNA release. Protein L1 is also a translational repressor protein, it controls the translation of the L11 operon by binding to its mRNA. This Listeria innocua serovar 6a (strain ATCC BAA-680 / CLIP 11262) protein is Large ribosomal subunit protein uL1.